The sequence spans 136 residues: ATP synthase epsilon chain (136 aa).

It belongs to the ATPase epsilon chain family. In terms of assembly, F-type ATPases have 2 components, CF(1) - the catalytic core - and CF(0) - the membrane proton channel. CF(1) has five subunits: alpha(3), beta(3), gamma(1), delta(1), epsilon(1). CF(0) has three main subunits: a, b and c.

Its subcellular location is the cell membrane. Its function is as follows. Produces ATP from ADP in the presence of a proton gradient across the membrane. The protein is ATP synthase epsilon chain of Macrococcus caseolyticus (strain JCSC5402) (Macrococcoides caseolyticum).